The following is a 258-amino-acid chain: Phosphate import ATP-binding protein PstB 1 (258 aa).

The 243-residue stretch at 5-247 (LDLTDVNIYY…EKIFSNPNQK (243 aa)) folds into the ABC transporter domain. 37–44 (GPSGCGKT) lines the ATP pocket.

It belongs to the ABC transporter superfamily. Phosphate importer (TC 3.A.1.7) family. The complex is composed of two ATP-binding proteins (PstB), two transmembrane proteins (PstC and PstA) and a solute-binding protein (PstS).

Its subcellular location is the cell membrane. It catalyses the reaction phosphate(out) + ATP + H2O = ADP + 2 phosphate(in) + H(+). Its function is as follows. Part of the ABC transporter complex PstSACB involved in phosphate import. Responsible for energy coupling to the transport system. In Mycobacterium tuberculosis (strain CDC 1551 / Oshkosh), this protein is Phosphate import ATP-binding protein PstB 1.